Consider the following 400-residue polypeptide: Subtilisin-like protease 7 (400 aa).

A signal peptide spans 1–20 (MGFITKAIPLALAAASVING). Positions 21 to 119 (AEILETRAGV…IERDARVQIN (99 aa)) are excised as a propeptide. In terms of domain architecture, Inhibitor I9 spans 36–118 (KYIVVMNDGI…YIERDARVQI (83 aa)). The Peptidase S8 domain maps to 129-400 (SWGLARVGSK…SKLINNGSGM (272 aa)). Residues Asp161 and His192 each act as charge relay system in the active site. The N-linked (GlcNAc...) asparagine glycan is linked to Asn252. Catalysis depends on Ser346, which acts as the Charge relay system. A glycan (N-linked (GlcNAc...) asparagine) is linked at Asn396.

The protein belongs to the peptidase S8 family.

It localises to the secreted. Its function is as follows. Secreted subtilisin-like serine protease with keratinolytic activity that contributes to pathogenicity. The chain is Subtilisin-like protease 7 (SUB7) from Trichophyton violaceum.